Here is a 377-residue protein sequence, read N- to C-terminus: Chaperone protein DnaJ (377 aa).

In terms of domain architecture, J spans 5–70 (DYYEVLGVGR…NKKAAYDQFG (66 aa)). The segment at 133 to 211 (GLTKELRIPT…CHGDGRVEKT (79 aa)) adopts a CR-type zinc-finger fold. The Zn(2+) site is built by cysteine 146, cysteine 149, cysteine 163, cysteine 166, cysteine 185, cysteine 188, cysteine 199, and cysteine 202. CXXCXGXG motif repeat units follow at residues 146-153 (CDVCDGSG), 163-170 (CGTCHGQG), 185-192 (CPTCHGRG), and 199-206 (CTKCHGDG).

It belongs to the DnaJ family. Homodimer. The cofactor is Zn(2+).

The protein resides in the cytoplasm. Functionally, participates actively in the response to hyperosmotic and heat shock by preventing the aggregation of stress-denatured proteins and by disaggregating proteins, also in an autonomous, DnaK-independent fashion. Unfolded proteins bind initially to DnaJ; upon interaction with the DnaJ-bound protein, DnaK hydrolyzes its bound ATP, resulting in the formation of a stable complex. GrpE releases ADP from DnaK; ATP binding to DnaK triggers the release of the substrate protein, thus completing the reaction cycle. Several rounds of ATP-dependent interactions between DnaJ, DnaK and GrpE are required for fully efficient folding. Also involved, together with DnaK and GrpE, in the DNA replication of plasmids through activation of initiation proteins. The polypeptide is Chaperone protein DnaJ (Shewanella sp. (strain MR-4)).